The sequence spans 464 residues: UDP-N-acetylmuramoylalanine--D-glutamate ligase (464 aa).

112–118 (GTDGKTT) is a binding site for ATP.

It belongs to the MurCDEF family.

The protein resides in the cytoplasm. It catalyses the reaction UDP-N-acetyl-alpha-D-muramoyl-L-alanine + D-glutamate + ATP = UDP-N-acetyl-alpha-D-muramoyl-L-alanyl-D-glutamate + ADP + phosphate + H(+). Its pathway is cell wall biogenesis; peptidoglycan biosynthesis. Functionally, cell wall formation. Catalyzes the addition of glutamate to the nucleotide precursor UDP-N-acetylmuramoyl-L-alanine (UMA). The polypeptide is UDP-N-acetylmuramoylalanine--D-glutamate ligase (Chlorobium phaeobacteroides (strain DSM 266 / SMG 266 / 2430)).